Here is a 246-residue protein sequence, read N- to C-terminus: Small ribosomal subunit protein uS2 (246 aa).

This sequence belongs to the universal ribosomal protein uS2 family.

This is Small ribosomal subunit protein uS2 from Pseudomonas paraeruginosa (strain DSM 24068 / PA7) (Pseudomonas aeruginosa (strain PA7)).